A 132-amino-acid chain; its full sequence is MDVTRLLLATLLVFLCFFTADSHLPPEEKLRDDRSLRSNSSVNLLDFPSVSIVALNKKSKQISRKEAEKKRSSKKEASMKTVARPRTPLSAPCVATRNSCKPPAPACCDPCASCQCRFFRSACSCRVLSLNC.

Positions 1 to 22 are cleaved as a signal peptide; it reads MDVTRLLLATLLVFLCFFTADS. N-linked (GlcNAc...) asparagine glycosylation is present at N39. Residues 62-85 are disordered; the sequence is ISRKEAEKKRSSKKEASMKTVARP. Positions 63-78 are enriched in basic and acidic residues; it reads SRKEAEKKRSSKKEAS. 5 disulfide bridges follow: C93–C108, C100–C114, C107–C125, C111–C132, and C116–C123. The Agouti domain maps to 93–132; it reads CVATRNSCKPPAPACCDPCASCQCRFFRSACSCRVLSLNC.

Its subcellular location is the secreted. Involved in the regulation of melanogenesis. The binding of ASP to MC1R precludes alpha-MSH initiated signaling and thus blocks production of cAMP, leading to a down-regulation of eumelanogenesis (brown/black pigment) and thus increasing synthesis of pheomelanin (yellow/red pigment). The protein is Agouti-signaling protein (ASIP) of Pongo pygmaeus (Bornean orangutan).